The sequence spans 207 residues: ConoCAP (207 aa).

The N-terminal stretch at 1–21 (MVSLGHVLFVILLPVLLPVAA) is a signal peptide. A propeptide spanning residues 22 to 48 (DDPDDQMLSQISLPSSSRSEYDDNDVS) is cleaved from the precursor. Residues C53 and C59 are joined by a disulfide bond. G60 is modified (glycine amide). Positions 63–82 (HRDRSRRQERYGKRLIPVLA) are excised as a propeptide. C87 and C92 are disulfide-bonded. Position 94 is an asparagine amide (N94). A propeptide spanning residues 98–160 (SLSGAGPALS…RDPAASGDLS (63 aa)) is cleaved from the precursor. A disordered region spans residues 131–155 (ARHEQQQQLLQQREQRGLESRDPAA). Over residues 143–152 (REQRGLESRD) the composition is skewed to basic and acidic residues. C165 and C171 are oxidised to a cystine. G173 carries the glycine amide modification. The propeptide occupies 177-207 (TLYSPWLERMNEVADDRSARNALCTRLGWRE).

Expressed by the venom duct.

The protein localises to the secreted. In contrast to other members of the CCAP family which are cardio-accelerators, conoCAP-a decreases the heart frequency in Drosophila larvae (26%), rats and zebrafish embryos. It also reduces the blood pressure in rats. It decreases systolic calcium in ventricular cardiac myocytes, indicating that it may act via impairment of intracellular calcium trafficking. Its function is as follows. Synthetic conoCAP-b decreases the heart frequency of 23% in Drosophila larvae. In terms of biological role, synthetic conoCAP-c decreases the heart frequency of 12% in Drosophila larvae. The sequence is that of ConoCAP (conoCAP) from Conus villepinii (Villepin's cone).